The chain runs to 199 residues: Prolactin-2 (199 aa).

Disulfide bonds link cysteine 4–cysteine 11, cysteine 58–cysteine 174, and cysteine 191–cysteine 199.

Belongs to the somatotropin/prolactin family.

The protein resides in the secreted. The sequence is that of Prolactin-2 from Alligator mississippiensis (American alligator).